Here is a 64-residue protein sequence, read N- to C-terminus: Large ribosomal subunit protein bL35 (64 aa).

Residues 1–41 (MPKMKSHSGASKRFKVSGKGKLLRQQANRRHLLEHKPSRRT) are disordered.

Belongs to the bacterial ribosomal protein bL35 family.

The polypeptide is Large ribosomal subunit protein bL35 (Nocardia farcinica (strain IFM 10152)).